Here is a 442-residue protein sequence, read N- to C-terminus: Trigger factor (442 aa).

The region spanning 163 to 248 (GDQVVIDFLG…IKEVKAPKAA (86 aa)) is the PPIase FKBP-type domain.

The protein belongs to the FKBP-type PPIase family. Tig subfamily.

Its subcellular location is the cytoplasm. The enzyme catalyses [protein]-peptidylproline (omega=180) = [protein]-peptidylproline (omega=0). Its function is as follows. Involved in protein export. Acts as a chaperone by maintaining the newly synthesized protein in an open conformation. Functions as a peptidyl-prolyl cis-trans isomerase. The polypeptide is Trigger factor (Dinoroseobacter shibae (strain DSM 16493 / NCIMB 14021 / DFL 12)).